A 478-amino-acid polypeptide reads, in one-letter code: Serine/threonine-protein phosphatase 2A activator 1 (478 aa).

The segment at 359–478 (DPSAIPPPSR…DITTKAPWAK (120 aa)) is disordered. A compositionally biased stretch (low complexity) spans 396 to 419 (APWATASQSTPPPSTGTAAPWATS).

This sequence belongs to the PTPA-type PPIase family.

It localises to the cytoplasm. Its subcellular location is the nucleus. It catalyses the reaction [protein]-peptidylproline (omega=180) = [protein]-peptidylproline (omega=0). PPIases accelerate the folding of proteins. It catalyzes the cis-trans isomerization of proline imidic peptide bonds in oligopeptides. Acts as a regulatory subunit for PP2A-like phosphatases modulating their activity or substrate specificity, probably by inducing a conformational change in the catalytic subunit, a direct target of the PPIase. Can reactivate inactive phosphatase PP2A-phosphatase methylesterase complexes (PP2Ai) in presence of ATP and Mg(2+) by dissociating the inactive form from the complex. The sequence is that of Serine/threonine-protein phosphatase 2A activator 1 (rrd1) from Aspergillus oryzae (strain ATCC 42149 / RIB 40) (Yellow koji mold).